A 92-amino-acid polypeptide reads, in one-letter code: uncharacterized protein (92 aa).

A helical transmembrane segment spans residues 65 to 86 (AVWIFWLCFLVSGLSRAFLVYF).

The protein localises to the membrane. This is an uncharacterized protein from Treponema pallidum (strain Nichols).